Consider the following 684-residue polypeptide: Glycine--tRNA ligase beta subunit (684 aa).

The protein belongs to the class-II aminoacyl-tRNA synthetase family. As to quaternary structure, tetramer of two alpha and two beta subunits.

The protein localises to the cytoplasm. The enzyme catalyses tRNA(Gly) + glycine + ATP = glycyl-tRNA(Gly) + AMP + diphosphate. The polypeptide is Glycine--tRNA ligase beta subunit (Pseudomonas syringae pv. tomato (strain ATCC BAA-871 / DC3000)).